The chain runs to 86 residues: MKEGIHPNYREVVFQDMSCDFSFITRSTIQTKDTIVKDGKEYPLAKIEVSSESHPFYTGTQKIMDTAGRVEKFRQKFGSKLGKVAK.

The protein belongs to the bacterial ribosomal protein bL31 family. Type B subfamily. Part of the 50S ribosomal subunit.

This Cupriavidus pinatubonensis (strain JMP 134 / LMG 1197) (Cupriavidus necator (strain JMP 134)) protein is Large ribosomal subunit protein bL31B.